Consider the following 807-residue polypeptide: 85/88 kDa calcium-independent phospholipase A2 (807 aa).

Phosphoserine is present on S13. 9 ANK repeats span residues 120–147, 151–181, 185–215, 219–248, 251–281, 286–312, 316–345, 349–378, and 382–403; these read WTVT…ANST, EGCT…QMDV, KGET…GLNQ, QGLT…RCNI, PGGF…QIHS, YGAS…DVDS, SGNT…NAGA, HGNT…EVDT, and FGET…KALL. The next 2 membrane-spanning stretches (helical) occupy residues 481 to 501 and 512 to 532; these read LLCL…LIAI and LFDW…ILHS. Positions 482–666 constitute a PNPLA domain; the sequence is LCLDGGGVKG…LANNPTLDAM (185 aa). Positions 486–491 match the GXGXXG motif; sequence GGGVKG. The GXSXG signature appears at 518–522; sequence GTSTG. S520 serves as the catalytic Nucleophile. The Proton acceptor role is filled by D653. Positions 653 to 655 match the DGA/G motif; it reads DGG. Residues 678–687 are calmodulin-binding (1-9-14 motif); it reads RKGQGNKVKK. Residues 749–760 are calmodulin-binding (IQ motif); sequence AWCEMVGIQYFR.

Homodimer formed by catalytic domains tightly interacting through a large hydrophobic interface. The contact area involves 3 alpha helices, several loops and a part of the beta sheet from each monomer. Both active sites of the dimer are in close proximity adopting an open conformation that provide sufficient space for phospholipid access and favoring cooperativity in deacylation-reacylation reactions. Each monomer has 9 ankyrin repeats stacked side-by-side in an elongated structure oriented outwards from the catalytic core. Expressed in neurons of central and peripheral nervous system. Highly expressed in Purkinje cells in cerebellum and dorsal and ventral horn neurons in the spinal cord. Expressed in testis (at protein level). Expressed in skeletal muscle (at protein level).

The protein resides in the cytoplasm. It is found in the cell membrane. It localises to the mitochondrion. Its subcellular location is the cell projection. The protein localises to the pseudopodium. It carries out the reaction a 1,2-diacyl-sn-glycero-3-phosphocholine + H2O = a 1-acyl-sn-glycero-3-phosphocholine + a fatty acid + H(+). The catalysed reaction is a 1-O-alkyl-2-acyl-sn-glycero-3-phosphocholine + H2O = a 1-O-alkyl-sn-glycero-3-phosphocholine + a fatty acid + H(+). It catalyses the reaction 1,2-dihexadecanoyl-sn-glycero-3-phosphocholine + H2O = 1-hexadecanoyl-sn-glycero-3-phosphocholine + hexadecanoate + H(+). The enzyme catalyses 1-hexadecanoyl-2-(9Z-octadecenoyl)-sn-glycero-3-phosphocholine + H2O = 1-hexadecanoyl-sn-glycero-3-phosphocholine + (9Z)-octadecenoate + H(+). It carries out the reaction 1-hexadecanoyl-2-(9Z,12Z-octadecadienoyl)-sn-glycero-3-phosphocholine + H2O = (9Z,12Z)-octadecadienoate + 1-hexadecanoyl-sn-glycero-3-phosphocholine + H(+). The catalysed reaction is 1-hexadecanoyl-2-(5Z,8Z,11Z,14Z-eicosatetraenoyl)-sn-glycero-3-phosphocholine + H2O = 1-hexadecanoyl-sn-glycero-3-phosphocholine + (5Z,8Z,11Z,14Z)-eicosatetraenoate + H(+). It catalyses the reaction 1-octadecanoyl-2-(5Z,8Z,11Z,14Z-eicosatetraenoyl)-sn-glycero-3-phosphocholine + H2O = 1-octadecanoyl-sn-glycero-3-phosphocholine + (5Z,8Z,11Z,14Z)-eicosatetraenoate + H(+). The enzyme catalyses 1-hexadecanoyl-2-(5Z,8Z,11Z,14Z-eicosatetraenoyl)-sn-glycero-3-phosphoethanolamine + H2O = 1-hexadecanoyl-sn-glycero-3-phosphoethanolamine + (5Z,8Z,11Z,14Z)-eicosatetraenoate + H(+). It carries out the reaction 1,2-dihexadecanoyl-sn-glycero-3-phosphate + H2O = 1-hexadecanoyl-sn-glycero-3-phosphate + hexadecanoate + H(+). The catalysed reaction is a 1-acyl-sn-glycero-3-phosphocholine + H2O = sn-glycerol 3-phosphocholine + a fatty acid + H(+). It catalyses the reaction 1-hexadecanoyl-sn-glycero-3-phosphocholine + H2O = sn-glycerol 3-phosphocholine + hexadecanoate + H(+). The enzyme catalyses 1-(5Z,8Z,11Z,14Z-eicosatetraenoyl)-sn-glycero-3-phosphocholine + H2O = sn-glycerol 3-phosphocholine + (5Z,8Z,11Z,14Z)-eicosatetraenoate + H(+). It carries out the reaction 2-(5Z,8Z,11Z,14Z)-eicosatetraenoyl-sn-glycero-3-phosphocholine + H2O = sn-glycerol 3-phosphocholine + (5Z,8Z,11Z,14Z)-eicosatetraenoate + H(+). The catalysed reaction is 1-O-hexadecyl-2-(5Z,8Z,11Z,14Z)-eicosatetraenoyl-sn-glycero-3-phosphocholine + H2O = 1-O-hexadecyl-sn-glycero-3-phosphocholine + (5Z,8Z,11Z,14Z)-eicosatetraenoate + H(+). It catalyses the reaction 1-O-hexadecyl-2-acetyl-sn-glycero-3-phosphocholine + H2O = 1-O-hexadecyl-sn-glycero-3-phosphocholine + acetate + H(+). The enzyme catalyses hexadecanoyl-CoA + H2O = hexadecanoate + CoA + H(+). It carries out the reaction 1',3'-bis[1,2-di-(9Z-octadecenoyl)-sn-glycero-3-phospho]-glycerol + H2O = 1'-[1,2-di-(9Z-octadecenoyl)-sn-glycero-3-phospho]-3'-[1-(9Z-octadecenoyl)-sn-glycero-3-phospho]-glycerol + (9Z)-octadecenoate + H(+). The catalysed reaction is 1'-[1,2-di-(9Z-octadecenoyl)-sn-glycero-3-phospho]-3'-[1-(9Z-octadecenoyl)-sn-glycero-3-phospho]-glycerol + H2O = 1',3'-bis-[1-(9Z-octadecenoyl)-sn-glycero-3-phospho]-glycerol + (9Z)-octadecenoate + H(+). It catalyses the reaction 1',3'-bis-[1,2-di-(9Z,12Z-octadecadienoyl)-sn-glycero-3-phospho]-glycerol + H2O = 1'-[1,2-di-(9Z,12Z-octadecadienoyl)-sn-glycero-3-phospho]-3'-[1-(9Z,12Z-octadecadienoyl)-sn-glycero-3-phospho]-glycerol + (9Z,12Z)-octadecadienoate + H(+). The enzyme catalyses 1-octadecanoyl-2-(15-hydroxy-(5Z,8Z,11Z,13E)-eicosatetraenoyl)-sn-glycero-3-phosphoethanolamine + H2O = 1-octadecanoyl-sn-glycero-3-phosphoethanolamine + 15-hydroxy-(5Z,8Z,11Z,13E)-eicosatetraenoate + H(+). With respect to regulation, inhibited by calcium-activated calmodulin. Activated by ATP. Inhibited by bromoenol lactone (BEL). Its function is as follows. Calcium-independent phospholipase involved in phospholipid remodeling with implications in cellular membrane homeostasis, mitochondrial integrity and signal transduction. Hydrolyzes the ester bond of the fatty acyl group attached at sn-1 or sn-2 position of phospholipids (phospholipase A1 and A2 activity respectively), producing lysophospholipids that are used in deacylation-reacylation cycles. Hydrolyzes both saturated and unsaturated long fatty acyl chains in various glycerophospholipid classes such as phosphatidylcholines, phosphatidylethanolamines and phosphatidates, with a preference for hydrolysis at sn-2 position. Can further hydrolyze lysophospholipids carrying saturated fatty acyl chains (lysophospholipase activity). Upon oxidative stress, contributes to remodeling of mitochondrial phospholipids in pancreatic beta cells, in a repair mechanism to reduce oxidized lipid content. Preferentially hydrolyzes oxidized polyunsaturated fatty acyl chains from cardiolipins, yielding monolysocardiolipins that can be reacylated with unoxidized fatty acyls to regenerate native cardiolipin species. Hydrolyzes oxidized glycerophosphoethanolamines present in pancreatic islets, releasing oxidized polyunsaturated fatty acids such as hydroxyeicosatetraenoates (HETEs). Has thioesterase activity toward fatty-acyl CoA releasing CoA-SH known to facilitate fatty acid transport and beta-oxidation in mitochondria particularly in skeletal muscle. Plays a role in regulation of membrane dynamics and homeostasis. Selectively hydrolyzes sn-2 arachidonoyl group in plasmalogen phospholipids, structural components of lipid rafts and myelin. Regulates F-actin polymerization at the pseudopods, which is required for both speed and directionality of MCP1/CCL2-induced monocyte chemotaxis. Targets membrane phospholipids to produce potent lipid signaling messengers. Generates lysophosphatidate (LPA, 1-acyl-glycerol-3-phosphate), which acts via G-protein receptors in various cell types. Has phospholipase A2 activity toward platelet-activating factor (PAF, 1-O-alkyl-2-acetyl-sn-glycero-3-phosphocholine), likely playing a role in inactivation of this potent pro-inflammatory signaling lipid. In response to glucose, amplifies calcium influx in pancreatic beta cells to promote INS secretion. The polypeptide is 85/88 kDa calcium-independent phospholipase A2 (Pla2g6) (Mus musculus (Mouse)).